The following is a 135-amino-acid chain: Large ribosomal subunit protein uL16c (135 aa).

It belongs to the universal ribosomal protein uL16 family. As to quaternary structure, part of the 50S ribosomal subunit.

It is found in the plastid. This Epifagus virginiana (Beechdrops) protein is Large ribosomal subunit protein uL16c.